We begin with the raw amino-acid sequence, 344 residues long: RNA 3'-terminal phosphate cyclase (344 aa).

ATP-binding positions include Gln-103 and 283–287 (HLADQ). Residue His-308 is the Tele-AMP-histidine intermediate of the active site.

Belongs to the RNA 3'-terminal cyclase family. Type 1 subfamily.

It is found in the cytoplasm. The enzyme catalyses a 3'-end 3'-phospho-ribonucleotide-RNA + ATP = a 3'-end 2',3'-cyclophospho-ribonucleotide-RNA + AMP + diphosphate. Catalyzes the conversion of 3'-phosphate to a 2',3'-cyclic phosphodiester at the end of RNA. The mechanism of action of the enzyme occurs in 3 steps: (A) adenylation of the enzyme by ATP; (B) transfer of adenylate to an RNA-N3'P to produce RNA-N3'PP5'A; (C) and attack of the adjacent 2'-hydroxyl on the 3'-phosphorus in the diester linkage to produce the cyclic end product. The biological role of this enzyme is unknown but it is likely to function in some aspects of cellular RNA processing. This Salmonella agona (strain SL483) protein is RNA 3'-terminal phosphate cyclase.